Reading from the N-terminus, the 230-residue chain is Homeobox protein Hox-B5 (230 aa).

The segment at 1–135 (GGGGGNVSGS…GAAGTDGQSP (135 aa)) is disordered. The segment covering 49-65 (FPGQESSRFRANQNCPL) has biased composition (polar residues). Residues 87 to 103 (ATSSAHFTETEETSASS) show a composition bias toward low complexity. The Antp-type hexapeptide motif lies at 137–142 (IFPWMR). A DNA-binding region (homeobox) is located at residues 155 to 214 (GKRARTAYTRYQTLELEKEFHFNRYLTRRRRIEIAHTLCLSERQIKIWFQNRRMKWKKDN).

The protein belongs to the Antp homeobox family.

Its subcellular location is the nucleus. In terms of biological role, sequence-specific transcription factor which is part of a developmental regulatory system that provides cells with specific positional identities on the anterior-posterior axis. This is Homeobox protein Hox-B5 (hoxb5) from Xenopus laevis (African clawed frog).